Consider the following 813-residue polypeptide: Ribonuclease R (813 aa).

One can recognise an RNB domain in the interval 260–587 (RVDLRDLPLV…LHRAIKYLLA (328 aa)). Lys544 bears the N6-acetyllysine mark. An S1 motif domain is found at 644-725 (GNVFKGVISS…DERKIDFSLI (82 aa)). The segment at 733–813 (NVGKTAREKA…KRAAKKKVAE (81 aa)) is disordered. Basic and acidic residues-rich tracts occupy residues 737–749 (TARE…DAGK) and 761–774 (VNFE…GEKK). Basic residues predominate over residues 775–791 (TKPKAAKKDARKAKKPS). The segment covering 792 to 801 (AKTQKIAAAT) has biased composition (low complexity). Positions 802-813 (KAKRAAKKKVAE) are enriched in basic residues.

It belongs to the RNR ribonuclease family. RNase R subfamily. In terms of assembly, monomer.

It is found in the cytoplasm. The enzyme catalyses Exonucleolytic cleavage in the 3'- to 5'-direction to yield nucleoside 5'-phosphates.. Its function is as follows. 3'-5' exoribonuclease that releases 5'-nucleoside monophosphates and is involved in maturation of structured RNAs. Required for the expression of virulence genes on the large plasmid of S.flexneri at the post-transcriptional level. The polypeptide is Ribonuclease R (Shigella flexneri).